A 372-amino-acid polypeptide reads, in one-letter code: Probable leucine aminopeptidase MCYG_08380 (372 aa).

The first 19 residues, 1 to 19, serve as a signal peptide directing secretion; sequence MKVSVLAAVAAFAAATAIA. Asn-96 carries an N-linked (GlcNAc...) asparagine glycan. Positions 175 and 194 each coordinate Zn(2+). Asn-195 and Asn-219 each carry an N-linked (GlcNAc...) asparagine glycan. Residues Glu-233 and Asp-260 each coordinate Zn(2+). The cysteines at positions 305 and 309 are disulfide-linked. His-338 contributes to the Zn(2+) binding site.

It belongs to the peptidase M28 family. M28E subfamily. As to quaternary structure, monomer. It depends on Zn(2+) as a cofactor.

Its subcellular location is the secreted. Probable extracellular aminopeptidase which contributes to pathogenicity. In Arthroderma otae (strain ATCC MYA-4605 / CBS 113480) (Microsporum canis), this protein is Probable leucine aminopeptidase MCYG_08380.